Consider the following 227-residue polypeptide: SPbeta prophage-derived uncharacterized membrane protein YomJ (227 aa).

Helical transmembrane passes span 16–36 (LFFL…IVGL) and 131–151 (GIVA…GLSA).

The protein localises to the cell membrane. The polypeptide is SPbeta prophage-derived uncharacterized membrane protein YomJ (yomJ) (Bacillus subtilis (strain 168)).